Consider the following 262-residue polypeptide: ATP synthase subunit a (262 aa).

7 consecutive transmembrane segments (helical) span residues 30–50 (ITSLTNIAILFIIGLLVLTIF), 64–84 (WNIVLETWVASILGIVKDQIG), 91–111 (LIYFPLIFTFFSFVFISNILG), 123–143 (ISVTLGLSIAIMIGVTLIGFS), 149–169 (FFSLFVPKGTPLALVPLLVLI), 195–215 (LFGVISMLSVSACMAVSSILL), and 220–240 (IGLPLAVLVVLYGLELLVALL).

Belongs to the ATPase A chain family. As to quaternary structure, F-type ATPases have 2 components, CF(1) - the catalytic core - and CF(0) - the membrane proton channel. CF(1) has five subunits: alpha(3), beta(3), gamma(1), delta(1), epsilon(1). CF(0) has three main subunits: a, b and c.

It localises to the mitochondrion inner membrane. Functionally, mitochondrial membrane ATP synthase (F(1)F(0) ATP synthase or Complex V) produces ATP from ADP in the presence of a proton gradient across the membrane which is generated by electron transport complexes of the respiratory chain. F-type ATPases consist of two structural domains, F(1) - containing the extramembraneous catalytic core and F(0) - containing the membrane proton channel, linked together by a central stalk and a peripheral stalk. During catalysis, ATP synthesis in the catalytic domain of F(1) is coupled via a rotary mechanism of the central stalk subunits to proton translocation. Key component of the proton channel; it may play a direct role in the translocation of protons across the membrane. The sequence is that of ATP synthase subunit a (ATP6) from Allomyces arbusculus (Aquatic fungus).